The following is a 399-amino-acid chain: Developmentally-regulated G-protein 1 (399 aa).

The 226-residue stretch at 63–288 (GRVALIGFPS…LLARMWDEMG (226 aa)) folds into the OBG-type G domain. GTP is bound by residues 69 to 76 (GFPSVGKS), 115 to 119 (DLPGI), and 246 to 249 (NKID). The 79-residue stretch at 288-366 (GLVRVYSKPQ…EDEDVVQIVK (79 aa)) folds into the TGS domain. Positions 367–399 (KKERDEGGRGRFKSHSNAPARIADREKKAPLKQ) are disordered. A compositionally biased stretch (basic and acidic residues) spans 388–399 (IADREKKAPLKQ).

Belongs to the TRAFAC class OBG-HflX-like GTPase superfamily. OBG GTPase family. Expressed in actively growing tissues and reproductive organs. Mostly expressed in leaves, stems and siliques. Also present in flowers and flower buds, and, to a lower extent, in roots.

Its subcellular location is the cytoplasmic vesicle. It is found in the cytoplasm. Functionally, binds GDP and GTP, and has low GTPase activity. May interact with phosphatidic acid (PA). The polypeptide is Developmentally-regulated G-protein 1 (DRG1) (Arabidopsis thaliana (Mouse-ear cress)).